Reading from the N-terminus, the 422-residue chain is Beta-1,3-galactosyltransferase 2 (422 aa).

The Cytoplasmic portion of the chain corresponds to 1 to 24; that stretch reads MLQWRRRHCCFAKMTWNAKRSLFR. A helical; Signal-anchor for type II membrane protein membrane pass occupies residues 25-45; the sequence is THLIGVLSLVFLFAMFLFFNH. The Lumenal portion of the chain corresponds to 46-422; it reads HDWLPGRAGF…AGRYRHRKLH (377 aa). N-linked (GlcNAc...) asparagine glycosylation is found at asparagine 75, asparagine 100, asparagine 119, asparagine 176, and asparagine 226. The interval 90 to 110 is disordered; it reads TLRPQTATNSNNTDLSPQGVT.

Belongs to the glycosyltransferase 31 family. The cofactor is Mn(2+). In terms of tissue distribution, detected in heart and brain.

The protein resides in the golgi apparatus membrane. The catalysed reaction is an N-acetyl-beta-D-glucosaminyl derivative + UDP-alpha-D-galactose = a beta-D-galactosyl-(1-&gt;3)-N-acetyl-beta-D-glucosaminyl derivative + UDP + H(+). It carries out the reaction a beta-D-GlcNAc-(1-&gt;3)-beta-D-Gal-(1-&gt;4)-beta-D-Glc-(1&lt;-&gt;1)-Cer(d18:1(4E)) + UDP-alpha-D-galactose = a beta-D-Gal-(1-&gt;3)-beta-D-GlcNAc-(1-&gt;3)-beta-D-Gal-(1-&gt;4)-beta-D-Glc-(1&lt;-&gt;1')-Cer(d18:1(4E)) + UDP + H(+). The enzyme catalyses a neolactoside IV(3)-beta-GlcNAc-nLc4Cer(d18:1(4E)) + UDP-alpha-D-galactose = a neolactoside IV(3)-beta-[Gal-beta-(1-&gt;3)-GlcNAc]-nLc4Cer(d18:1(4E)) + UDP + H(+). It participates in protein modification; protein glycosylation. Functionally, beta-1,3-galactosyltransferase that transfers galactose from UDP-galactose to substrates with a terminal beta-N-acetylglucosamine (beta-GlcNAc) residue. Can also utilize substrates with a terminal galactose residue, albeit with lower efficiency. Involved in the biosynthesis of the carbohydrate moieties of glycolipids and glycoproteins. Inactive towards substrates with terminal alpha-N-acetylglucosamine (alpha-GlcNAc) or alpha-N-acetylgalactosamine (alpha-GalNAc) residues. The chain is Beta-1,3-galactosyltransferase 2 from Homo sapiens (Human).